Reading from the N-terminus, the 839-residue chain is AMP deaminase (839 aa).

The helical transmembrane segment at 8–28 threads the bilayer; sequence LALAALFGASFVAVSGFFMHF. Positions 40-167 are disordered; the sequence is ERKENPDGDE…DDDDNLTNSE (128 aa). Residues 85-94 are compositionally biased toward gly residues; sequence DGGGGGGGDT. 2 positions are modified to phosphoserine: serine 134 and serine 140. The span at 153–162 shows a compositional bias: acidic residues; it reads SVEESDDDDN. Position 203 is a phosphoserine (serine 203). 289-296 is a binding site for ATP; it reads AHYPQGKS. Zn(2+)-binding residues include histidine 391 and histidine 393. Substrate is bound by residues histidine 393 and 462 to 467; that span reads KFNLKY. Histidine 659 serves as a coordination point for Zn(2+). Substrate is bound at residue glutamate 662. Histidine 681 (proton acceptor) is an active-site residue. Aspartate 736 provides a ligand contact to Zn(2+). 737 to 740 contributes to the substrate binding site; it reads DPLQ.

This sequence belongs to the metallo-dependent hydrolases superfamily. Adenosine and AMP deaminases family. As to quaternary structure, homodimer. Interacts with AHK4. Interacts with EER5. Zn(2+) is required as a cofactor. As to expression, expressed in seedlings, roots, leaves, flowers, pollen grains, pollen tubes and siliques, and at a lower level in stems.

It is found in the membrane. The protein localises to the microsome membrane. It carries out the reaction AMP + H2O + H(+) = IMP + NH4(+). It participates in purine metabolism; IMP biosynthesis via salvage pathway; IMP from AMP: step 1/1. Activated by ATP. Activated by sulfate ions (in vitro). Inhibited by phosphate ions. In terms of biological role, AMP deaminase plays a critical role in energy metabolism. Essential for the transition from zygote to embryo. The polypeptide is AMP deaminase (Arabidopsis thaliana (Mouse-ear cress)).